The following is a 200-amino-acid chain: MAEQEEKQTRRATAARKTQETDITISISLDGTGSSSIESGIGFLDHMLTSFSRHSGIDITLQCQGDLVVDDHHTVEDIAIVLGGAITEALGEKRGIRRYGWAMIPMDEALARCAVDLGGRSCSVFRAEFSRPLIEGLSTEMVEHFFTSLAGSMNANIHIAILEGRNTHHKIEAIFKAFAYAMKDAIKVEGNAVPSTKGVF.

It belongs to the imidazoleglycerol-phosphate dehydratase family.

It localises to the cytoplasm. It catalyses the reaction D-erythro-1-(imidazol-4-yl)glycerol 3-phosphate = 3-(imidazol-4-yl)-2-oxopropyl phosphate + H2O. The protein operates within amino-acid biosynthesis; L-histidine biosynthesis; L-histidine from 5-phospho-alpha-D-ribose 1-diphosphate: step 6/9. The chain is Imidazoleglycerol-phosphate dehydratase from Chlorobium phaeovibrioides (strain DSM 265 / 1930) (Prosthecochloris vibrioformis (strain DSM 265)).